The following is a 188-amino-acid chain: dCTP deaminase (188 aa).

Residues 111 to 116 (KSTYAR), 135 to 137 (TLE), Gln156, Tyr170, Lys179, and Gln180 contribute to the dCTP site. Glu137 (proton donor/acceptor) is an active-site residue.

The protein belongs to the dCTP deaminase family. Homotrimer.

The enzyme catalyses dCTP + H2O + H(+) = dUTP + NH4(+). It participates in pyrimidine metabolism; dUMP biosynthesis; dUMP from dCTP (dUTP route): step 1/2. In terms of biological role, catalyzes the deamination of dCTP to dUTP. The protein is dCTP deaminase of Rickettsia typhi (strain ATCC VR-144 / Wilmington).